Reading from the N-terminus, the 238-residue chain is Nicotinamide/nicotinic acid mononucleotide adenylyltransferase (238 aa).

NAD(+)-binding residues include Ser-29 and Phe-30. ATP-binding residues include His-37 and Lys-70. Residues Thr-107, Gly-136, Asp-138, Trp-149, Arg-168, and Asn-199 each contribute to the NAD(+) site. Residue 204-205 (SR) coordinates ATP.

This sequence belongs to the eukaryotic NMN adenylyltransferase family. The cofactor is a divalent metal cation.

The protein localises to the nucleus. It catalyses the reaction beta-nicotinamide D-ribonucleotide + ATP + H(+) = diphosphate + NAD(+). The enzyme catalyses nicotinate beta-D-ribonucleotide + ATP + H(+) = deamido-NAD(+) + diphosphate. The protein operates within cofactor biosynthesis; NAD(+) biosynthesis; deamido-NAD(+) from nicotinate D-ribonucleotide: step 1/1. Its pathway is cofactor biosynthesis; NAD(+) biosynthesis; NAD(+) from nicotinamide D-ribonucleotide: step 1/1. Its function is as follows. Catalyzes the formation of NAD(+) from nicotinamide mononucleotide (NMN) and ATP. Can also use the deamidated form; nicotinic acid mononucleotide (NaMN) as substrate. This chain is Nicotinamide/nicotinic acid mononucleotide adenylyltransferase (NMNAT), found in Arabidopsis thaliana (Mouse-ear cress).